A 386-amino-acid chain; its full sequence is Vesicle-associated protein 2-2 (386 aa).

At Met-1 the chain carries N-acetylmethionine. The Cytoplasmic portion of the chain corresponds to 1–363 (MNMPLLDIQP…TKKIVKEVHN (363 aa)). An MSP domain is found at 5-125 (LLDIQPRTLQ…EENKLRVTLV (121 aa)). A Phosphoserine modification is found at Ser-279. The stretch at 300-353 (ELKLVKDIEEMKLKVDALESKLKQADSTISKLMEERSISSQHRQSLQHELAELR) forms a coiled coil. A helical; Anchor for type IV membrane protein transmembrane segment spans residues 364-384 (GFPLLYVCVVAFIAYVIGHFL).

This sequence belongs to the VAMP-associated protein (VAP) (TC 9.B.17) family. In terms of assembly, interacts with cowpea mosaic virus (CPMV) NTP-binding protein (NTB).

It is found in the endoplasmic reticulum membrane. In terms of biological role, may play a role in vesicle trafficking. The protein is Vesicle-associated protein 2-2 (PVA22) of Arabidopsis thaliana (Mouse-ear cress).